Here is a 163-residue protein sequence, read N- to C-terminus: 6,7-dimethyl-8-ribityllumazine synthase (163 aa).

5-amino-6-(D-ribitylamino)uracil is bound by residues Phe-27, 58–60 (ALE), and 87–89 (CVV). 92–93 (DT) provides a ligand contact to (2S)-2-hydroxy-3-oxobutyl phosphate. Residue His-95 is the Proton donor of the active site. Asn-120 contributes to the 5-amino-6-(D-ribitylamino)uracil binding site. Position 134 (Arg-134) interacts with (2S)-2-hydroxy-3-oxobutyl phosphate.

It belongs to the DMRL synthase family.

The catalysed reaction is (2S)-2-hydroxy-3-oxobutyl phosphate + 5-amino-6-(D-ribitylamino)uracil = 6,7-dimethyl-8-(1-D-ribityl)lumazine + phosphate + 2 H2O + H(+). It participates in cofactor biosynthesis; riboflavin biosynthesis; riboflavin from 2-hydroxy-3-oxobutyl phosphate and 5-amino-6-(D-ribitylamino)uracil: step 1/2. Its function is as follows. Catalyzes the formation of 6,7-dimethyl-8-ribityllumazine by condensation of 5-amino-6-(D-ribitylamino)uracil with 3,4-dihydroxy-2-butanone 4-phosphate. This is the penultimate step in the biosynthesis of riboflavin. This Rhodopseudomonas palustris (strain BisA53) protein is 6,7-dimethyl-8-ribityllumazine synthase.